The primary structure comprises 337 residues: Glycerol-3-phosphate dehydrogenase [NAD(P)+] 2 (337 aa).

Threonine 11, tryptophan 12, and lysine 105 together coordinate NADPH. Sn-glycerol 3-phosphate-binding residues include lysine 105, glycine 139, and threonine 141. An NADPH-binding site is contributed by alanine 143. Positions 194, 247, 257, 258, and 259 each coordinate sn-glycerol 3-phosphate. Catalysis depends on lysine 194, which acts as the Proton acceptor. Arginine 258 provides a ligand contact to NADPH. Residues valine 282 and glutamate 284 each coordinate NADPH.

It belongs to the NAD-dependent glycerol-3-phosphate dehydrogenase family.

The protein localises to the cytoplasm. The enzyme catalyses sn-glycerol 3-phosphate + NAD(+) = dihydroxyacetone phosphate + NADH + H(+). It catalyses the reaction sn-glycerol 3-phosphate + NADP(+) = dihydroxyacetone phosphate + NADPH + H(+). The protein operates within membrane lipid metabolism; glycerophospholipid metabolism. In terms of biological role, catalyzes the reduction of the glycolytic intermediate dihydroxyacetone phosphate (DHAP) to sn-glycerol 3-phosphate (G3P), the key precursor for phospholipid synthesis. The chain is Glycerol-3-phosphate dehydrogenase [NAD(P)+] 2 from Lactobacillus delbrueckii subsp. bulgaricus (strain ATCC 11842 / DSM 20081 / BCRC 10696 / JCM 1002 / NBRC 13953 / NCIMB 11778 / NCTC 12712 / WDCM 00102 / Lb 14).